Reading from the N-terminus, the 53-residue chain is uncharacterized protein (53 aa).

Positions 1 to 10 are enriched in polar residues; the sequence is MHILTRSSKN. Residues 1–25 are disordered; that stretch reads MHILTRSSKNAFPRSRSRQDIHISS.

This is an uncharacterized protein from Saccharomyces cerevisiae (strain ATCC 204508 / S288c) (Baker's yeast).